The following is a 366-amino-acid chain: Geranylgeranyl pyrophosphate synthase, chloroplastic/chromoplastic (366 aa).

The interval 44-65 is disordered; the sequence is KRTVSSSSSSSLITKEDNNLKS. Residues K112, R115, and H144 each contribute to the isopentenyl diphosphate site. Positions 151 and 157 each coordinate Mg(2+). R162 is a dimethylallyl diphosphate binding site. R163 is a binding site for isopentenyl diphosphate. Dimethylallyl diphosphate contacts are provided by K251, T252, Q289, K306, and K316.

It belongs to the FPP/GGPP synthase family. As to quaternary structure, dimer. Mg(2+) serves as cofactor.

The protein localises to the plastid. Its subcellular location is the chloroplast stroma. It localises to the chromoplast. The enzyme catalyses isopentenyl diphosphate + dimethylallyl diphosphate = (2E)-geranyl diphosphate + diphosphate. The catalysed reaction is isopentenyl diphosphate + (2E)-geranyl diphosphate = (2E,6E)-farnesyl diphosphate + diphosphate. It carries out the reaction isopentenyl diphosphate + (2E,6E)-farnesyl diphosphate = (2E,6E,10E)-geranylgeranyl diphosphate + diphosphate. The protein operates within isoprenoid biosynthesis; farnesyl diphosphate biosynthesis; farnesyl diphosphate from geranyl diphosphate and isopentenyl diphosphate: step 1/1. Its pathway is isoprenoid biosynthesis; geranyl diphosphate biosynthesis; geranyl diphosphate from dimethylallyl diphosphate and isopentenyl diphosphate: step 1/1. It functions in the pathway isoprenoid biosynthesis; geranylgeranyl diphosphate biosynthesis; geranylgeranyl diphosphate from farnesyl diphosphate and isopentenyl diphosphate: step 1/1. In terms of biological role, catalyzes the trans-addition of the three molecules of IPP onto DMAPP to form geranylgeranyl pyrophosphate. This Sinapis alba (White mustard) protein is Geranylgeranyl pyrophosphate synthase, chloroplastic/chromoplastic (GGPS1).